The following is a 449-amino-acid chain: Pectate lyase L (449 aa).

An N-terminal signal peptide occupies residues 1–26 (MFKRNDRSKNGFNALRLGVSFVLASS). Cys27 carries N-palmitoyl cysteine lipidation. A lipid anchor (S-diacylglycerol cysteine) is attached at Cys27. 7 PbH1 repeats span residues 158-179 (GDFW…IYIG), 180-202 (GSNN…QLGR), 213-242 (PANN…AAKL), 245-267 (GSGN…DLYS), 274-308 (IGAV…KLGG), 336-358 (PGTI…AFDK), and 359-391 (GEHV…WWKN). 4 residues coordinate Ca(2+): Asp236, Asp260, Asp261, and Asp264. The Proton acceptor role is filled by Lys305.

It belongs to the polysaccharide lyase 9 family. Ca(2+) serves as cofactor.

The protein resides in the secreted. The enzyme catalyses Eliminative cleavage of (1-&gt;4)-alpha-D-galacturonan to give oligosaccharides with 4-deoxy-alpha-D-galact-4-enuronosyl groups at their non-reducing ends.. Its activity is regulated as follows. Activated in presence of the surfactant polysorbate 20, while inhibited in the presence of polysorbate 40, polysorbate 60, polysorbate 80, Triton X-100 and sodium dodecyl sulfate. Inhibited by the metal chelator ethylenediaminetetraacetic acid (EDTA). Inhibited by iron and cobalt ions. Its function is as follows. Presents an endo-cleaving activity on the homogalacturonan (HG) region in pectin with a preference for low- or unmethylated pectin. The sequence is that of Pectate lyase L from Paenibacillus polymyxa (strain SC2) (Bacillus polymyxa).